A 141-amino-acid chain; its full sequence is MSLSIEQIMEIIPHRYPMLLVDRVEEIEPGKRAVGYKNVTFNEQIFQGHYPGKPIMPGVLMIEALAQLGGVAILSLDKYKGKKPILGAVKNAKFRRMVVPGDVLKLEIEIVKVKGPAGIGKGIATVNGEKAVEAEITFMIV.

Residue histidine 49 is part of the active site.

This sequence belongs to the thioester dehydratase family. FabZ subfamily.

The protein localises to the cytoplasm. It catalyses the reaction a (3R)-hydroxyacyl-[ACP] = a (2E)-enoyl-[ACP] + H2O. Functionally, involved in unsaturated fatty acids biosynthesis. Catalyzes the dehydration of short chain beta-hydroxyacyl-ACPs and long chain saturated and unsaturated beta-hydroxyacyl-ACPs. The sequence is that of 3-hydroxyacyl-[acyl-carrier-protein] dehydratase FabZ from Clostridium acetobutylicum (strain ATCC 824 / DSM 792 / JCM 1419 / IAM 19013 / LMG 5710 / NBRC 13948 / NRRL B-527 / VKM B-1787 / 2291 / W).